The primary structure comprises 336 residues: tRNA N6-adenosine threonylcarbamoyltransferase (336 aa).

Residues H110 and H114 each coordinate Fe cation. Substrate is bound by residues 133-137, D166, G179, and N271; that span reads LVSGK. D300 is a binding site for Fe cation.

It belongs to the KAE1 / TsaD family. It depends on Fe(2+) as a cofactor.

The protein localises to the cytoplasm. It carries out the reaction L-threonylcarbamoyladenylate + adenosine(37) in tRNA = N(6)-L-threonylcarbamoyladenosine(37) in tRNA + AMP + H(+). In terms of biological role, required for the formation of a threonylcarbamoyl group on adenosine at position 37 (t(6)A37) in tRNAs that read codons beginning with adenine. Is involved in the transfer of the threonylcarbamoyl moiety of threonylcarbamoyl-AMP (TC-AMP) to the N6 group of A37, together with TsaE and TsaB. TsaD likely plays a direct catalytic role in this reaction. This is tRNA N6-adenosine threonylcarbamoyltransferase from Buchnera aphidicola subsp. Acyrthosiphon pisum (strain 5A).